The primary structure comprises 230 residues: 2,3-bisphosphoglycerate-dependent phosphoglycerate mutase 2 (230 aa).

Substrate contacts are provided by residues arginine 8–asparagine 15, threonine 21–glycine 22, arginine 60, glutamate 87–tyrosine 90, lysine 98, arginine 114–arginine 115, and glycine 183–asparagine 184. The active-site Tele-phosphohistidine intermediate is the histidine 9. Catalysis depends on glutamate 87, which acts as the Proton donor/acceptor.

The protein belongs to the phosphoglycerate mutase family. BPG-dependent PGAM subfamily.

The catalysed reaction is (2R)-2-phosphoglycerate = (2R)-3-phosphoglycerate. It participates in carbohydrate degradation; glycolysis; pyruvate from D-glyceraldehyde 3-phosphate: step 3/5. Its function is as follows. Catalyzes the interconversion of 2-phosphoglycerate and 3-phosphoglycerate. The chain is 2,3-bisphosphoglycerate-dependent phosphoglycerate mutase 2 from Lactiplantibacillus plantarum (strain ATCC BAA-793 / NCIMB 8826 / WCFS1) (Lactobacillus plantarum).